A 151-amino-acid chain; its full sequence is IFN signaling evasion protein OPG029 (151 aa).

It belongs to the orthopoxvirus OPG029 family. As to quaternary structure, interacts with host TANK, TBKBP1 and AZI2; these interactions prevent interferon production. Interacts with host STAT2.

Functionally, prevents establishment of cellular antiviral state by blocking virus-induced phosphorylation and activation of interferon regulatory factors 3/IRF3 and 7/IRF7, transcription factors critical for the induction of interferons alpha and beta. This blockage is produced through the inhibition of host TBK1, by binding host TBK1 adapter proteins TBKBP1 and AZI2, thereby producing a strong inhibition of the phosphorylation and activation of IRF3 and IRF7. Also acts as an inhibitor of the cellular response to type I IFN by interacting with host STAT2. Mechanistically, exerts its inhibitory effect after host ISGF3 complex (composed of STAT1, STAT2 and IRF9) binding to the interferon stimulated response element (ISRE). This Homo sapiens (Human) protein is IFN signaling evasion protein OPG029 (OPG029).